The primary structure comprises 392 residues: Iripin-1 (392 aa).

An N-terminal signal peptide occupies residues Met1–Ala16. Asn104, Asn196, and Asn265 each carry an N-linked (GlcNAc...) asparagine glycan.

It belongs to the serpin family. In terms of assembly, interacts with human KLKB1. Interacts with human ST14. Interacts with human PLG (plasmin). In terms of tissue distribution, highly expressed in salivary gland. Expressed in midgut and ovary.

Its subcellular location is the secreted. Serine protease inhibitor that modulates blood feeding of ticks on vertebrate species. Modestly inhibits human trypsin, plasma kallikrein (KLKB1), matriptase (ST14) and plasmin (PLG) via a classic serpin inhibitory mechanism. Modestly reduces enzymatic activity of human alpha-chymotrypsin, coagulation factor Xa (F10), factor XIIa (F12), cathepsin G (CTSG), tPA/tissue-type plasminogen activator (PLAT) and uPA/urokinase-type plasminogen activator (PLAU). Probably acts as a substrate rather than an inhibitor for the human neutrophil elastase (ELANE) and thus reduces its enzymatic activity in in vitro assays. Decreases expression of adhesion molecules VCAM1 and CD99 on the surface of human cells. Increases the production of chemokines for neutrophils and monocytes, such as KC/CXCL1, MIP-2/CXCL2 and MIP-1/CCL2, and anti-inflammatory cytokine IL10 in mouse inflammation models. Reduces the recruitment of mouse neutrophils and monocytes to the site of inflammation. Decreases expression of CXCR2 on the surface of mouse neutrophils. Increases expression of integrin ITGAM/ITGB2 on the surface of mouse neutrophils. This is Iripin-1 from Ixodes ricinus (Common tick).